The chain runs to 430 residues: Adenylosuccinate synthetase (430 aa).

Residues 13–19 (GDEGKGK) and 41–43 (GHT) contribute to the GTP site. Asp14 (proton acceptor) is an active-site residue. Residues Asp14 and Gly41 each coordinate Mg(2+). Residues 14–17 (DEGK), 39–42 (NAGH), Thr130, Arg144, Gln225, Thr240, and Arg304 each bind IMP. The active-site Proton donor is His42. 300–306 (ATTGRAR) lines the substrate pocket. GTP is bound by residues Arg306, 332–334 (KLD), and 414–416 (STG).

The protein belongs to the adenylosuccinate synthetase family. Homodimer. The cofactor is Mg(2+).

It localises to the cytoplasm. It catalyses the reaction IMP + L-aspartate + GTP = N(6)-(1,2-dicarboxyethyl)-AMP + GDP + phosphate + 2 H(+). Its pathway is purine metabolism; AMP biosynthesis via de novo pathway; AMP from IMP: step 1/2. Plays an important role in the de novo pathway of purine nucleotide biosynthesis. Catalyzes the first committed step in the biosynthesis of AMP from IMP. The sequence is that of Adenylosuccinate synthetase from Pseudomonas aeruginosa (strain LESB58).